A 459-amino-acid polypeptide reads, in one-letter code: Ribulose bisphosphate carboxylase (459 aa).

Residue asparagine 111 coordinates substrate. Lysine 166 serves as the catalytic Proton acceptor. A substrate-binding site is contributed by lysine 168. The Mg(2+) site is built by lysine 191, aspartate 193, and glutamate 194. Lysine 191 carries the N6-carboxylysine modification. Histidine 287 serves as the catalytic Proton acceptor. 3 residues coordinate substrate: arginine 288, histidine 321, and serine 368.

The protein belongs to the RuBisCO large chain family. Type II subfamily. Homodimer. Mg(2+) is required as a cofactor.

It is found in the cytoplasm. It catalyses the reaction 2 (2R)-3-phosphoglycerate + 2 H(+) = D-ribulose 1,5-bisphosphate + CO2 + H2O. The catalysed reaction is D-ribulose 1,5-bisphosphate + O2 = 2-phosphoglycolate + (2R)-3-phosphoglycerate + 2 H(+). In terms of biological role, ruBisCO catalyzes two reactions: the carboxylation of D-ribulose 1,5-bisphosphate, the primary event in carbon dioxide fixation, as well as the oxidative fragmentation of the pentose substrate. Both reactions occur simultaneously and in competition at the same active site. The sequence is that of Ribulose bisphosphate carboxylase from Halothiobacillus neapolitanus (strain ATCC 23641 / c2) (Thiobacillus neapolitanus).